The primary structure comprises 459 residues: MSAFTPREVVSELDRYIVGQNAAKRAVAIALRNRWRRQQVDDDLRDEIHPKNIIMIGPTGVGKTEIARRLAKLAQAPFVKVEASKFTEVGYVGRDVESMIRDLVEAAIALVREEETEKVGPRAEELAEDRLIELMQGGGVKSSSATPPFGFAPPPPPPVQRVSDSAREKFRAQLRAGTLDDVEVEVETAESSPTFMRGFSGQGMEEIGVNLQDLFKNVPGMNKTRRRRVRVPEALQLLRKEEAAKLVDPDRVQREAVARAEMNGIIFIDEIDKIASREGGKGGGGPDVSREGVQRDILPIVEGSTINTKYGVVKTDHMLFIAAGAFHVSKPSDLIPELQGRFPIRVELEPLTGEDLVRILREPKNSLLRQYTALLSTEGVRLSFTDDAVTELARIAQQANESTANIGARRLHTILERLLDEVSFSASEMGPRDFQVDAAYVRERLAAIVQDEDLSRYIL.

Residues Val-18, 60 to 65 (GVGKTE), Asp-269, Glu-337, and Arg-409 contribute to the ATP site.

Belongs to the ClpX chaperone family. HslU subfamily. In terms of assembly, a double ring-shaped homohexamer of HslV is capped on each side by a ring-shaped HslU homohexamer. The assembly of the HslU/HslV complex is dependent on binding of ATP.

It is found in the cytoplasm. Functionally, ATPase subunit of a proteasome-like degradation complex; this subunit has chaperone activity. The binding of ATP and its subsequent hydrolysis by HslU are essential for unfolding of protein substrates subsequently hydrolyzed by HslV. HslU recognizes the N-terminal part of its protein substrates and unfolds these before they are guided to HslV for hydrolysis. This chain is ATP-dependent protease ATPase subunit HslU, found in Myxococcus xanthus (strain DK1622).